Consider the following 344-residue polypeptide: UDP-N-acetylglucosamine--N-acetylmuramyl-(pentapeptide) pyrophosphoryl-undecaprenol N-acetylglucosamine transferase (344 aa).

Residues 9 to 11, Asn118, Arg157, Ser188, and Gln282 contribute to the UDP-N-acetyl-alpha-D-glucosamine site; that span reads TGG.

This sequence belongs to the glycosyltransferase 28 family. MurG subfamily.

The protein resides in the cell inner membrane. The catalysed reaction is di-trans,octa-cis-undecaprenyl diphospho-N-acetyl-alpha-D-muramoyl-L-alanyl-D-glutamyl-meso-2,6-diaminopimeloyl-D-alanyl-D-alanine + UDP-N-acetyl-alpha-D-glucosamine = di-trans,octa-cis-undecaprenyl diphospho-[N-acetyl-alpha-D-glucosaminyl-(1-&gt;4)]-N-acetyl-alpha-D-muramoyl-L-alanyl-D-glutamyl-meso-2,6-diaminopimeloyl-D-alanyl-D-alanine + UDP + H(+). It functions in the pathway cell wall biogenesis; peptidoglycan biosynthesis. Its function is as follows. Cell wall formation. Catalyzes the transfer of a GlcNAc subunit on undecaprenyl-pyrophosphoryl-MurNAc-pentapeptide (lipid intermediate I) to form undecaprenyl-pyrophosphoryl-MurNAc-(pentapeptide)GlcNAc (lipid intermediate II). This Aquifex aeolicus (strain VF5) protein is UDP-N-acetylglucosamine--N-acetylmuramyl-(pentapeptide) pyrophosphoryl-undecaprenol N-acetylglucosamine transferase.